Here is a 160-residue protein sequence, read N- to C-terminus: Eosinophil cationic protein (160 aa).

The N-terminal stretch at 1–27 (MVPKLFTSQICLLLLLGLSGVGGSLHA) is a signal peptide. The interval 28–72 (KPRQFTRAQWFAIQHVSLNPPQCTTAMRVINNYQRRCKDQNTFLR) is required for nearly all of the bactericidal activities; partially involved in LPS-binding. The active-site Proton acceptor is histidine 42. 4 cysteine pairs are disulfide-bonded: cysteine 50-cysteine 110, cysteine 64-cysteine 123, cysteine 82-cysteine 138, and cysteine 89-cysteine 98. Position 60 is a 3'-nitrotyrosine (tyrosine 60). Residue 65–69 (KDQNT) coordinates substrate. N-linked (GlcNAc...) asparagine glycosylation is found at asparagine 86, asparagine 92, asparagine 111, and asparagine 119. Residue histidine 155 is the Proton donor of the active site.

The protein belongs to the pancreatic ribonuclease family. Interacts with bacterial lipopolysaccharide (LPS) and lipoteichoic acid (LTA). In vitro interacts with phospholipid bilayers.

The protein localises to the secreted. Cytotoxin and helminthotoxin with low-efficiency ribonuclease activity. Possesses a wide variety of biological activities. Exhibits antibacterial activity. In Pongo pygmaeus (Bornean orangutan), this protein is Eosinophil cationic protein (RNASE3).